The sequence spans 307 residues: UDP-N-acetylenolpyruvoylglucosamine reductase (307 aa).

An FAD-binding PCMH-type domain is found at 29 to 197; it reads RVGGPAEWFA…LSARFRLDPG (169 aa). R176 is an active-site residue. S227 acts as the Proton donor in catalysis. The active site involves E297.

Belongs to the MurB family. The cofactor is FAD.

It is found in the cytoplasm. It catalyses the reaction UDP-N-acetyl-alpha-D-muramate + NADP(+) = UDP-N-acetyl-3-O-(1-carboxyvinyl)-alpha-D-glucosamine + NADPH + H(+). The protein operates within cell wall biogenesis; peptidoglycan biosynthesis. Its function is as follows. Cell wall formation. This chain is UDP-N-acetylenolpyruvoylglucosamine reductase, found in Prochlorococcus marinus (strain MIT 9313).